We begin with the raw amino-acid sequence, 851 residues long: Glycogen phosphorylase, liver form (851 aa).

The residue at position 2 (Ala2) is an N-acetylalanine. Position 15 is a phosphoserine; by PHK; in form phosphorylase a (Ser15). AMP contacts are provided by residues 43–45 (DRN), Tyr76, and Arg310. Residue Lys364 is modified to N6-succinyllysine. Lys470 carries the N6-acetyllysine modification. Phosphoserine occurs at positions 524, 561, and 639. Lys681 carries the post-translational modification N6-(pyridoxal phosphate)lysine. Lys796 is subject to N6-acetyllysine.

Belongs to the glycogen phosphorylase family. As to quaternary structure, homodimer; enzymatically active. Interacts with PPP1R3B; recruits the phosphatase PP1 which dephosphorylates and inactivates PYGL/glycogen phosphorylase. Requires pyridoxal 5'-phosphate as cofactor. Acetylation, which is up-regulated by glucose and insulin and down-regulated by glucagon, inhibits the glycogen phosphorylase activity by promoting PPP1R3B-mediated recruitment of phosphatase PP1 and Ser-15 dephosphorylation. In terms of processing, phosphorylation at Ser-15 converts inactive phosphorylase b into active phosphorylase a. Dephosphorylation of Ser-15 by phosphatase PP1 inactivates the enzyme.

It is found in the cytoplasm. It localises to the cytosol. The catalysed reaction is [(1-&gt;4)-alpha-D-glucosyl](n) + phosphate = [(1-&gt;4)-alpha-D-glucosyl](n-1) + alpha-D-glucose 1-phosphate. With respect to regulation, allosterically regulated through the non-covalent binding of metabolites, being activated by AMP and inhibited by ATP, ADP, and glucose-6-phosphate. The activity is also controlled by post-translational modifications including phosphorylation and acetylation. Its function is as follows. Allosteric enzyme that catalyzes the rate-limiting step in glycogen catabolism, the phosphorolytic cleavage of glycogen to produce glucose-1-phosphate, and plays a central role in maintaining cellular and organismal glucose homeostasis. The polypeptide is Glycogen phosphorylase, liver form (Bos taurus (Bovine)).